We begin with the raw amino-acid sequence, 379 residues long: Probable pectin lyase A (379 aa).

An N-terminal signal peptide occupies residues 1–20; that stretch reads MKYSTIFSAAAAVFAGSAAA. Disulfide bonds link Cys83–Cys102 and Cys92–Cys226. N-linked (GlcNAc...) asparagine glycosylation occurs at Asn129. Arg256 is an active-site residue. Cys322 and Cys330 are disulfide-bonded.

Belongs to the polysaccharide lyase 1 family.

It is found in the secreted. It catalyses the reaction Eliminative cleavage of (1-&gt;4)-alpha-D-galacturonan methyl ester to give oligosaccharides with 4-deoxy-6-O-methyl-alpha-D-galact-4-enuronosyl groups at their non-reducing ends.. Its function is as follows. Pectinolytic enzymes consist of four classes of enzymes: pectin lyase, polygalacturonase, pectin methylesterase and rhamnogalacturonase. Among pectinolytic enzymes, pectin lyase is the most important in depolymerization of pectin, since it cleaves internal glycosidic bonds of highly methylated pectins. The chain is Probable pectin lyase A (pelA) from Aspergillus niger (strain ATCC MYA-4892 / CBS 513.88 / FGSC A1513).